Reading from the N-terminus, the 397-residue chain is Succinate--CoA ligase [ADP-forming] subunit beta (397 aa).

One can recognise an ATP-grasp domain in the interval 9–254; sequence KALLKGYGAP…ETEEDAKEIE (246 aa). Residues Lys46, 53–55, Glu109, Ala112, and Glu117 contribute to the ATP site; that span reads GRG. Mg(2+) is bound by residues Asn209 and Asp223. Substrate-binding positions include Asn274 and 331 to 333; that span reads GIM.

This sequence belongs to the succinate/malate CoA ligase beta subunit family. In terms of assembly, heterotetramer of two alpha and two beta subunits. The cofactor is Mg(2+).

The catalysed reaction is succinate + ATP + CoA = succinyl-CoA + ADP + phosphate. The enzyme catalyses GTP + succinate + CoA = succinyl-CoA + GDP + phosphate. The protein operates within carbohydrate metabolism; tricarboxylic acid cycle; succinate from succinyl-CoA (ligase route): step 1/1. Functionally, succinyl-CoA synthetase functions in the citric acid cycle (TCA), coupling the hydrolysis of succinyl-CoA to the synthesis of either ATP or GTP and thus represents the only step of substrate-level phosphorylation in the TCA. The beta subunit provides nucleotide specificity of the enzyme and binds the substrate succinate, while the binding sites for coenzyme A and phosphate are found in the alpha subunit. This Rhizobium etli (strain CIAT 652) protein is Succinate--CoA ligase [ADP-forming] subunit beta.